A 551-amino-acid polypeptide reads, in one-letter code: MTIEFSHTTGLLLLAMPALLLMAAVIKPKQGAAYARAYRQRVQWTSFAAFGLALLAVVSFLFARQQNLMLGAGSLPAGLGLLALSIQVNGLTLVLASLVSFVLSVIARYSVQYLDGDPQQARFFRLLAVTGGFFLLVVISGNLGLFTLAIIATGFGLHRLLSFYADRPRAIMATHKKSIFSRTADALLLAATVLIGHQIGSLEFSQISAYVHAQDHLSIALHVAAWLIVLAAILKSAQFPFHGWLIQVMEAPTPVSALMHAGVVYSGAIIVLRTSELLAADGTALLLLALIGLMTLAIGSLVMLTQSAIKSSLAWSTAAQLGFMMLELGLGLFGLALLHLVGHSLYKAHAFLSSGSMTDHLRQAKVLKNRPISVVAWFTTVIVSGLFTLGIAAAMGLSIDQEPMLPAVLTIIALATAQLMLKALSHGTWREILVAAGAAIAMTGVYVFLHEVFITGFADTLAATPQRAPLLDLLLMAITIITFLFVAWLQGPGKTLMSPERQFALFVHLNNGLYLDRWVERLAFRFWPEKVGRAPKKSCAVIPPNPSGIEP.

The next 14 membrane-spanning stretches (helical) occupy residues 6–26 (SHTT…AAVI), 42–62 (VQWT…SFLF), 65–85 (QQNL…LALS), 86–106 (IQVN…LSVI), 132–152 (GFFL…AIIA), 187–207 (LLLA…FSQI), 217–237 (LSIA…LKSA), 252–272 (PTPV…IIVL), 284–304 (ALLL…LVML), 321–341 (LGFM…LHLV), 374–394 (VVAW…IAAA), 404–424 (MLPA…LKAL), 434–454 (VAAG…EVFI), and 469–489 (PLLD…VAWL).

The protein belongs to the inorganic carbon transporter (TC 9.A.2) DabB family. In terms of assembly, forms a complex with DabA2, possibly a heterodimer.

It localises to the cell inner membrane. With respect to regulation, uptake of inorganic carbon by cells in the presence of thiosulphate is fully inhibited by the uncouplers carbonyl cyanide m-chlorophenyl hydrazone (CCCP), carbonyl cyanide p-trifluoromethoxyphenyl hydrazone (FCCP), S13 or SF6847. Not inhibited by the ATPase inhibitor N,N-dicyclohexylcarbodiimide (DCCD). Inorganic carbon uptake is inhibited by the ionophore carbonyl cyanide m-chlorophenyl hydrazone (CCCP), suggesting uptake is coupled to a cation gradient. Functionally, part of an energy-coupled inorganic carbon pump; its substrate may be carbon dioxide. Expression of both dabA2 and dabB2 (DAB2) restores growth in ambient air to E.coli deleted of its carbonic anhydrase genes (called CAfree, deletion of 'can' and 'cynT'); neither dabA2 or dabB2 alone is sufficient. Rescue is pH-independent, suggesting it transports CO(2) and not carbonate ions. Together the genes allow greater than normal uptake of inorganic carbon by E.coli. Uptake of carbon dioxide rather than bicarbonate has been suggested based on kinetic calculations. The sequence is that of Probable inorganic carbon transporter subunit DabB2 from Halothiobacillus neapolitanus (strain ATCC 23641 / c2) (Thiobacillus neapolitanus).